The following is an 889-amino-acid chain: DNA mismatch repair protein MutS (889 aa).

641 to 648 lines the ATP pocket; sequence GPNMAGKS.

Belongs to the DNA mismatch repair MutS family.

Functionally, this protein is involved in the repair of mismatches in DNA. It is possible that it carries out the mismatch recognition step. This protein has a weak ATPase activity. The protein is DNA mismatch repair protein MutS of Orientia tsutsugamushi (strain Boryong) (Rickettsia tsutsugamushi).